Reading from the N-terminus, the 215-residue chain is MAPMKLYGSTLSWNVTRCVAVLEEAGAEYEIVPLDFSKGEHKAPDHLARNPFGQVPALQDGDLFLWESRAICKYVCRKNKPELLKDGDLKESAMVDVWLEVESNQYTPALNPILFQCLIRPMMFGAPPDEKVVEENLEKLKKVLEVYEARLTKCKYLAGDYISVADLSHVAGTVCLGATPHASVLDAYPHVKAWWTDLMARPSSQKVASLMKPPA.

A GST N-terminal domain is found at 2 to 83; the sequence is APMKLYGSTL…YVCRKNKPEL (82 aa). Residues serine 12, 41–42, 54–55, and 67–68 contribute to the glutathione site; these read HK, QV, and ES. The 128-residue stretch at 88–215 folds into the GST C-terminal domain; sequence DLKESAMVDV…KVASLMKPPA (128 aa).

Belongs to the GST superfamily. Phi family. As to expression, constitutively expressed in roots. Expressed in anthers, callus, panicles, sheaths and stems (at protein level).

It catalyses the reaction RX + glutathione = an S-substituted glutathione + a halide anion + H(+). Its function is as follows. Conjugation of reduced glutathione to a wide number of exogenous and endogenous hydrophobic electrophiles. This is Probable glutathione S-transferase GSTF2 (GSTF2) from Oryza sativa subsp. japonica (Rice).